Here is a 447-residue protein sequence, read N- to C-terminus: SPARC-related modular calcium-binding protein 2 (447 aa).

Residues M1 to A21 form the signal peptide. The 53-residue stretch at Q34–D86 folds into the Kazal-like domain. Intrachain disulfides connect C40–C71, C44–C64, C53–C84, C90–C113, C124–C131, and C133–C153. One can recognise a Thyroglobulin type-1 1 domain in the interval V87–C153. Positions A147–P230 are disordered. Residues V161–D172 are compositionally biased toward basic and acidic residues. A glycan (N-linked (GlcNAc...) asparagine) is linked at N206. Polar residues predominate over residues N206–C216. The 69-residue stretch at A213–C281 folds into the Thyroglobulin type-1 2 domain. Cystine bridges form between C216–C240, C251–C258, and C260–C281. Residues D217–P230 are compositionally biased toward basic and acidic residues. EF-hand domains lie at L347–K382 and K384–E419. Positions 360, 362, 364, 366, 371, 397, 399, 401, 403, and 408 each coordinate Ca(2+). N362 is a glycosylation site (N-linked (GlcNAc...) asparagine). The disordered stretch occupies residues T416–G447.

In terms of assembly, binds various proteins from the extracellular matrix. Post-translationally, N-glycosylated. Strongly expressed in ovary, followed by heart, muscle, spleen, brain, thymus, lung, liver, kidney, spleen, testis, ovary and skeletal muscle.

The protein resides in the secreted. It localises to the extracellular space. The protein localises to the extracellular matrix. Its subcellular location is the basement membrane. Functionally, can stimulate endothelial cell proliferation, migration, as well as angiogenesis. Promotes matrix assembly and cell adhesiveness. In Mus musculus (Mouse), this protein is SPARC-related modular calcium-binding protein 2 (Smoc2).